The primary structure comprises 71 residues: Large ribosomal subunit protein bL31 (71 aa).

Residues Cys-16, Cys-18, Cys-37, and Cys-40 each contribute to the Zn(2+) site.

It belongs to the bacterial ribosomal protein bL31 family. Type A subfamily. In terms of assembly, part of the 50S ribosomal subunit. The cofactor is Zn(2+).

Binds the 23S rRNA. This Aeromonas salmonicida (strain A449) protein is Large ribosomal subunit protein bL31.